Here is a 138-residue protein sequence, read N- to C-terminus: Cysteine desulfuration protein SufE (138 aa).

Cysteine 51 (cysteine persulfide intermediate) is an active-site residue.

Belongs to the SufE family. Homodimer. Interacts with SufS.

The protein localises to the cytoplasm. The protein operates within cofactor biosynthesis; iron-sulfur cluster biosynthesis. Participates in cysteine desulfuration mediated by SufS. Cysteine desulfuration mobilizes sulfur from L-cysteine to yield L-alanine and constitutes an essential step in sulfur metabolism for biosynthesis of a variety of sulfur-containing biomolecules. Functions as a sulfur acceptor for SufS, by mediating the direct transfer of the sulfur atom from the S-sulfanylcysteine of SufS, an intermediate product of cysteine desulfuration process. The polypeptide is Cysteine desulfuration protein SufE (Salmonella dublin (strain CT_02021853)).